The following is an 835-amino-acid chain: Protein translocase subunit SecA (835 aa).

Residues Gln85, Gly103–Thr107, and Asp492 contribute to the ATP site. Positions Val788 to Val807 are disordered. Residues Cys819, Cys821, Cys830, and Cys831 each coordinate Zn(2+).

This sequence belongs to the SecA family. In terms of assembly, monomer and homodimer. Part of the essential Sec protein translocation apparatus which comprises SecA, SecYEG and auxiliary proteins SecDF. Other proteins may also be involved. Zn(2+) serves as cofactor.

The protein localises to the cell membrane. It is found in the cytoplasm. The enzyme catalyses ATP + H2O + cellular proteinSide 1 = ADP + phosphate + cellular proteinSide 2.. Functionally, part of the Sec protein translocase complex. Interacts with the SecYEG preprotein conducting channel. Has a central role in coupling the hydrolysis of ATP to the transfer of proteins into and across the cell membrane, serving as an ATP-driven molecular motor driving the stepwise translocation of polypeptide chains across the membrane. This is Protein translocase subunit SecA from Bacillus cereus (strain B4264).